We begin with the raw amino-acid sequence, 35 residues long: Small toxic polypeptide LdrA (35 aa).

Residues 8 to 28 (MIFWHDLAAPILAGIITAAIV) form a helical membrane-spanning segment.

Belongs to the Ldr toxic peptide family.

It is found in the cell inner membrane. In terms of biological role, toxic component of a type I toxin-antitoxin (TA) system. Inhibits ATP synthesis possibly due to its insertion in the cell inner membrane, ATP levels drop over 50% 2 minutes after induction. Overexpression is toxic leading to cell death, it inhibits cell growth within 30 minutes; C-terminally tagged versions of the protein are toxic while N-terminally tagged versions are not. The sequence is that of Small toxic polypeptide LdrA (ldrA) from Escherichia coli (strain K12).